Consider the following 339-residue polypeptide: UDP-N-acetylenolpyruvoylglucosamine reductase (339 aa).

Positions 16 to 188 (GIAATARYYS…LQVTLRLNKQ (173 aa)) constitute an FAD-binding PCMH-type domain. Arginine 164 is a catalytic residue. Serine 238 (proton donor) is an active-site residue. Glutamate 334 is an active-site residue.

The protein belongs to the MurB family. FAD serves as cofactor.

The protein resides in the cytoplasm. It catalyses the reaction UDP-N-acetyl-alpha-D-muramate + NADP(+) = UDP-N-acetyl-3-O-(1-carboxyvinyl)-alpha-D-glucosamine + NADPH + H(+). The protein operates within cell wall biogenesis; peptidoglycan biosynthesis. Its function is as follows. Cell wall formation. This is UDP-N-acetylenolpyruvoylglucosamine reductase from Amoebophilus asiaticus (strain 5a2).